A 64-amino-acid chain; its full sequence is Large ribosomal subunit protein bL32 (64 aa).

Residues 1 to 35 (MAVQKSRVTPSRRGMRRAHDALSAKQLSTDPTTGE) are disordered.

This sequence belongs to the bacterial ribosomal protein bL32 family.

This chain is Large ribosomal subunit protein bL32, found in Stenotrophomonas maltophilia (strain R551-3).